A 197-amino-acid chain; its full sequence is dITP/XTP pyrophosphatase (197 aa).

8-13 (TGNAGK) is a binding site for substrate. Mg(2+) is bound by residues Glu-40 and Asp-69. Asp-69 functions as the Proton acceptor in the catalytic mechanism. Substrate contacts are provided by residues Ser-70, 154 to 157 (FGYD), Lys-177, and 182 to 183 (HR).

It belongs to the HAM1 NTPase family. In terms of assembly, homodimer. It depends on Mg(2+) as a cofactor.

It carries out the reaction XTP + H2O = XMP + diphosphate + H(+). The enzyme catalyses dITP + H2O = dIMP + diphosphate + H(+). It catalyses the reaction ITP + H2O = IMP + diphosphate + H(+). In terms of biological role, pyrophosphatase that catalyzes the hydrolysis of nucleoside triphosphates to their monophosphate derivatives, with a high preference for the non-canonical purine nucleotides XTP (xanthosine triphosphate), dITP (deoxyinosine triphosphate) and ITP. Seems to function as a house-cleaning enzyme that removes non-canonical purine nucleotides from the nucleotide pool, thus preventing their incorporation into DNA/RNA and avoiding chromosomal lesions. The sequence is that of dITP/XTP pyrophosphatase (rdgB) from Salmonella typhi.